The chain runs to 101 residues: Cell cycle protein GpsB (101 aa).

Residues 34-71 adopt a coiled-coil conformation; the sequence is LDMVIKDYETFNQEIEKLQQENLHLSKQLEEAVEQGKR.

Belongs to the GpsB family. Forms polymers through the coiled coil domains. Interacts with PBP1, MreC and EzrA.

It is found in the cytoplasm. In terms of biological role, divisome component that associates with the complex late in its assembly, after the Z-ring is formed, and is dependent on DivIC and PBP2B for its recruitment to the divisome. Together with EzrA, is a key component of the system that regulates PBP1 localization during cell cycle progression. Its main role could be the removal of PBP1 from the cell pole after pole maturation is completed. Also contributes to the recruitment of PBP1 to the division complex. Not essential for septum formation. This is Cell cycle protein GpsB from Bacillus pumilus (strain SAFR-032).